A 493-amino-acid chain; its full sequence is Glutamate--tRNA ligase (493 aa).

The 'HIGH' region motif lies at 10–20; that stretch reads PSPTGDPHVGT. Positions 251 to 255 match the 'KMSKS' region motif; it reads KLSKR. Lys-254 is a binding site for ATP.

It belongs to the class-I aminoacyl-tRNA synthetase family. Glutamate--tRNA ligase type 1 subfamily. In terms of assembly, monomer.

The protein localises to the cytoplasm. It carries out the reaction tRNA(Glu) + L-glutamate + ATP = L-glutamyl-tRNA(Glu) + AMP + diphosphate. In terms of biological role, catalyzes the attachment of glutamate to tRNA(Glu) in a two-step reaction: glutamate is first activated by ATP to form Glu-AMP and then transferred to the acceptor end of tRNA(Glu). The chain is Glutamate--tRNA ligase from Pseudomonas syringae pv. syringae (strain B728a).